A 707-amino-acid chain; its full sequence is tRNA 5-methylaminomethyl-2-thiouridine biosynthesis bifunctional protein MnmC (707 aa).

A tRNA (mnm(5)s(2)U34)-methyltransferase region spans residues 1 to 264 (MTKKLEHEYI…KREMLFGTFE (264 aa)). Residues 312-707 (IGGGLAGAHA…LFRDLTRNRI (396 aa)) form an FAD-dependent cmnm(5)s(2)U34 oxidoreductase region.

It in the N-terminal section; belongs to the methyltransferase superfamily. tRNA (mnm(5)s(2)U34)-methyltransferase family. The protein in the C-terminal section; belongs to the DAO family. FAD is required as a cofactor.

The protein resides in the cytoplasm. The enzyme catalyses 5-aminomethyl-2-thiouridine(34) in tRNA + S-adenosyl-L-methionine = 5-methylaminomethyl-2-thiouridine(34) in tRNA + S-adenosyl-L-homocysteine + H(+). Catalyzes the last two steps in the biosynthesis of 5-methylaminomethyl-2-thiouridine (mnm(5)s(2)U) at the wobble position (U34) in tRNA. Catalyzes the FAD-dependent demodification of cmnm(5)s(2)U34 to nm(5)s(2)U34, followed by the transfer of a methyl group from S-adenosyl-L-methionine to nm(5)s(2)U34, to form mnm(5)s(2)U34. The protein is tRNA 5-methylaminomethyl-2-thiouridine biosynthesis bifunctional protein MnmC of Saccharophagus degradans (strain 2-40 / ATCC 43961 / DSM 17024).